A 573-amino-acid polypeptide reads, in one-letter code: Proline--tRNA ligase (573 aa).

This sequence belongs to the class-II aminoacyl-tRNA synthetase family. ProS type 1 subfamily. Homodimer.

The protein resides in the cytoplasm. It carries out the reaction tRNA(Pro) + L-proline + ATP = L-prolyl-tRNA(Pro) + AMP + diphosphate. In terms of biological role, catalyzes the attachment of proline to tRNA(Pro) in a two-step reaction: proline is first activated by ATP to form Pro-AMP and then transferred to the acceptor end of tRNA(Pro). As ProRS can inadvertently accommodate and process non-cognate amino acids such as alanine and cysteine, to avoid such errors it has two additional distinct editing activities against alanine. One activity is designated as 'pretransfer' editing and involves the tRNA(Pro)-independent hydrolysis of activated Ala-AMP. The other activity is designated 'posttransfer' editing and involves deacylation of mischarged Ala-tRNA(Pro). The misacylated Cys-tRNA(Pro) is not edited by ProRS. This chain is Proline--tRNA ligase, found in Cupriavidus necator (strain ATCC 17699 / DSM 428 / KCTC 22496 / NCIMB 10442 / H16 / Stanier 337) (Ralstonia eutropha).